A 692-amino-acid polypeptide reads, in one-letter code: Elongation factor G (692 aa).

Positions 8-283 (EKVRNIGIAA…AVVDYLPAPT (276 aa)) constitute a tr-type G domain. GTP-binding positions include 17 to 24 (AHIDAGKT), 81 to 85 (DTPGH), and 135 to 138 (NKMD).

The protein belongs to the TRAFAC class translation factor GTPase superfamily. Classic translation factor GTPase family. EF-G/EF-2 subfamily.

The protein localises to the cytoplasm. Its function is as follows. Catalyzes the GTP-dependent ribosomal translocation step during translation elongation. During this step, the ribosome changes from the pre-translocational (PRE) to the post-translocational (POST) state as the newly formed A-site-bound peptidyl-tRNA and P-site-bound deacylated tRNA move to the P and E sites, respectively. Catalyzes the coordinated movement of the two tRNA molecules, the mRNA and conformational changes in the ribosome. The chain is Elongation factor G from Nitratiruptor sp. (strain SB155-2).